Here is a 660-residue protein sequence, read N- to C-terminus: Nuclear factor erythroid 2-related factor 3 (660 aa).

Residues 120–214 (SAVGDGGQSA…KTEEHKMACA (95 aa)) are disordered. The span at 123–135 (GDGGQSASAGGGD) shows a compositional bias: gly residues. Composition is skewed to basic and acidic residues over residues 173-186 (MLRE…HSSQ) and 204-214 (SKTEEHKMACA). Positions 541-604 (LIRDIRRRGK…DIMRQKLHGL (64 aa)) constitute a bZIP domain. The basic motif stretch occupies residues 543–562 (RDIRRRGKNKVAAQNCRKRK). Positions 566–573 (ILNLEDDI) are leucine-zipper.

The protein belongs to the bZIP family. CNC subfamily. In terms of assembly, heterodimer with MAFG, MAFK and other small MAF proteins that binds to the MAF recognition elements (MARE). As to expression, high level expression in brain, thymus, testis and placenta. Medium level expression in uterus, stomach and lung. Low level expression in kidney. No expression in heart, liver, spleen and ovary.

Its subcellular location is the nucleus. Activates erythroid-specific, globin gene expression. This Mus musculus (Mouse) protein is Nuclear factor erythroid 2-related factor 3 (Nfe2l3).